A 911-amino-acid chain; its full sequence is Transcription factor E2F7 (911 aa).

Phosphoserine is present on Ser94. A DNA-binding region spans residues 141 to 210 (RKQKSLGLLC…VAKNQYSWHG (70 aa)). 3 disordered regions span residues 239-281 (QKEL…ANSR), 409-433 (SFNS…PYRQ), and 565-706 (SPGS…SPLQ). Residues 243 to 257 (NPIDHKSGERRRDGC) show a composition bias toward basic and acidic residues. Residues 281–366 (RKDKSLKIMS…GRKPAFKWIG (86 aa)) mediate DNA binding. Phosphoserine is present on Ser409. Residues 415–424 (ASERTQRKVN) are compositionally biased toward basic and acidic residues. Positions 566–579 (PGSGSGSGSVGGGS) are enriched in gly residues. The span at 599-621 (ERRLQEEEEEPATKRQCRDHEDG) shows a compositional bias: basic and acidic residues. Polar residues predominate over residues 669–687 (KATTNGFVSSEWGNPCSNT). Residues 688 to 698 (EIEKPSEENES) are compositionally biased toward basic and acidic residues. Ser840 carries the post-translational modification Phosphoserine. Positions 873-911 (FFKTPGSLGDPVLRRKERNQSRSSSSAQRRLEISSGGTD) are disordered.

It belongs to the E2F/DP family. Homodimer and heterodimer: mainly forms homodimers and, to a lesser extent, heterodimers with E2F8. Dimerization is important for DNA-binding. Interacts with HIF1A. Interacts with MN1.

It is found in the nucleus. In terms of biological role, atypical E2F transcription factor that participates in various processes such as angiogenesis, polyploidization of specialized cells and DNA damage response. Mainly acts as a transcription repressor that binds DNA independently of DP proteins and specifically recognizes the E2 recognition site 5'-TTTC[CG]CGC-3'. Directly represses transcription of classical E2F transcription factors such as E2F1. Acts as a regulator of S-phase by recognizing and binding the E2-related site 5'-TTCCCGCC-3' and mediating repression of G1/S-regulated genes. Plays a key role in polyploidization of cells in placenta and liver by regulating the endocycle, probably by repressing genes promoting cytokinesis and antagonizing action of classical E2F proteins (E2F1, E2F2 and/or E2F3). Required for placental development by promoting polyploidization of trophoblast giant cells. Also involved in DNA damage response: up-regulated by p53/TP53 following genotoxic stress and acts as a downstream effector of p53/TP53-dependent repression by mediating repression of indirect p53/TP53 target genes involved in DNA replication. Acts as a promoter of sprouting angiogenesis, possibly by acting as a transcription activator: associates with HIF1A, recognizes and binds the VEGFA promoter, which is different from canonical E2 recognition site, and activates expression of the VEGFA gene. Acts as a negative regulator of keratinocyte differentiation. The chain is Transcription factor E2F7 (E2F7) from Bos taurus (Bovine).